Reading from the N-terminus, the 338-residue chain is Glycerol-3-phosphate dehydrogenase [NAD(P)+] (338 aa).

3 residues coordinate NADPH: serine 13, tryptophan 14, and lysine 108. 3 residues coordinate sn-glycerol 3-phosphate: lysine 108, glycine 139, and serine 141. NADPH is bound at residue alanine 143. Positions 194, 247, 257, 258, and 259 each coordinate sn-glycerol 3-phosphate. The active-site Proton acceptor is lysine 194. Arginine 258 is an NADPH binding site. 2 residues coordinate NADPH: valine 282 and glutamate 284.

This sequence belongs to the NAD-dependent glycerol-3-phosphate dehydrogenase family.

Its subcellular location is the cytoplasm. It catalyses the reaction sn-glycerol 3-phosphate + NAD(+) = dihydroxyacetone phosphate + NADH + H(+). It carries out the reaction sn-glycerol 3-phosphate + NADP(+) = dihydroxyacetone phosphate + NADPH + H(+). Its pathway is membrane lipid metabolism; glycerophospholipid metabolism. Functionally, catalyzes the reduction of the glycolytic intermediate dihydroxyacetone phosphate (DHAP) to sn-glycerol 3-phosphate (G3P), the key precursor for phospholipid synthesis. The polypeptide is Glycerol-3-phosphate dehydrogenase [NAD(P)+] (Listeria innocua serovar 6a (strain ATCC BAA-680 / CLIP 11262)).